A 346-amino-acid polypeptide reads, in one-letter code: MAVGIFGLIPSSSPDELRKILQALSTKWGDVVEDFESLEVKPMKGAMTNEVFMVSWPRKETNLRCRKLLVRVYGEGVELFFNRDDEIRTFEYVARHGHGPTLLGRFAGGRVEEFIHARTLSATDLRDPNISALVASKLRRFHSIHIPGDRIMLIWDRMRTWVGQAKNLCSNEHSTEFGLDDIEDEINLLEQEVNNEQEIGFCHNDLQYGNIMIDEETNAITIIDYEYASYNPIAYDIANHFCEMAADYHSNTPHILDYTLYPGEEERRRFICNYLTSSGEEAREEDIEQLLDDIEKYTLASHLFWGLWGIISGYVNKIEFDYIEYSRQRFKQYWLRKPKLLSFFPS.

ATP contacts are provided by Arg-71, Gln-207, and Asp-224.

The protein belongs to the choline/ethanolamine kinase family.

It carries out the reaction choline + ATP = phosphocholine + ADP + H(+). Its pathway is phospholipid metabolism; phosphatidylcholine biosynthesis; phosphocholine from choline: step 1/1. Its function is as follows. Involved in phospholipid biosynthesis. Catalyzes the first step in phosphatidylcholine biosynthesis. The polypeptide is Probable choline kinase 3 (Arabidopsis thaliana (Mouse-ear cress)).